Consider the following 101-residue polypeptide: Alkene monooxygenase system, effector subunit (101 aa).

The protein belongs to the TmoD/XamoD family. In terms of assembly, monomer. The alkene monooxygenase multicomponent enzyme system is composed of an electron transfer component and a monooxygenase component interacting with the effector protein XamoD. The electron transfer component is composed of a ferredoxin reductase (XamoF) and a ferredoxin (XamoC), and the monooxygenase component is formed by a heterohexamer (dimer of heterotrimers) of two alpha subunits (XamoA), two beta subunits (XamoE) and two gamma subunits (XamoB).

The protein localises to the cytoplasm. Effector component of the alkene monooxygenase multicomponent enzyme system which catalyzes the O2- and NADH-dependent epoxidation of short chain (C2 to C6) alkenes to their corresponding epoxides. One possible role of this small protein might be to facilitate electron transfer between the reductase and ferredoxin components. The polypeptide is Alkene monooxygenase system, effector subunit (Xanthobacter autotrophicus (strain ATCC BAA-1158 / Py2)).